An 81-amino-acid polypeptide reads, in one-letter code: ATP synthase subunit C, cyanelle (81 aa).

2 consecutive transmembrane segments (helical) span residues alanine 7–glycine 27 and leucine 57–alanine 77.

The protein belongs to the ATPase C chain family. As to quaternary structure, F-type ATPases have 2 components, F(1) - the catalytic core - and F(0) - the membrane proton channel. F(1) has five subunits: alpha(3), beta(3), gamma(1), delta(1), epsilon(1). F(0) has four main subunits: a(1), b(1), b'(1) and c(10-14). The alpha and beta chains form an alternating ring which encloses part of the gamma chain. F(1) is attached to F(0) by a central stalk formed by the gamma and epsilon chains, while a peripheral stalk is formed by the delta, b and b' chains.

It localises to the plastid. It is found in the cyanelle thylakoid membrane. Its function is as follows. F(1)F(0) ATP synthase produces ATP from ADP in the presence of a proton or sodium gradient. F-type ATPases consist of two structural domains, F(1) containing the extramembraneous catalytic core and F(0) containing the membrane proton channel, linked together by a central stalk and a peripheral stalk. During catalysis, ATP synthesis in the catalytic domain of F(1) is coupled via a rotary mechanism of the central stalk subunits to proton translocation. In terms of biological role, key component of the F(0) channel; it plays a direct role in translocation across the membrane. A homomeric c-ring of between 10-14 subunits forms the central stalk rotor element with the F(1) delta and epsilon subunits. The sequence is that of ATP synthase subunit C, cyanelle from Cyanophora paradoxa.